The following is a 334-amino-acid chain: Transcription factor TGA2.1 (334 aa).

Residues 1–13 (MADASSRTDTSIV) show a composition bias toward polar residues. The tract at residues 1-49 (MADASSRTDTSIVVDNDDKNHQLENGHSGAVMASNSSDRSDRSDKLMDQ) is disordered. Over residues 38–49 (DRSDRSDKLMDQ) the composition is skewed to basic and acidic residues. The bZIP domain maps to 48–92 (DQKTIRRLAQNREAARKSRLRKKAYVQQLESSKLKLAQLEQELQK). Residues 50-70 (KTIRRLAQNREAARKSRLRKK) form a basic motif region. Residues 76 to 90 (LESSKLKLAQLEQEL) are leucine-zipper. One can recognise a DOG1 domain in the interval 115–331 (ALTFDLEYTR…RALSSLWLAR (217 aa)).

It belongs to the bZIP family. In terms of assembly, interacts with NPR1/NH1 and NPR3/NH3.

It localises to the nucleus. In terms of biological role, plays a negative role in rice basal defense responses to the bacterial blight pathogen Xanthomomas oryzae pv. oryzae (Xoo). May function in both positive and negative regulation of rice defense genes. Binds DNA in vitro. Acts as a transcriptional activator when bound to NPR1/NH1 in vitro. Binds to the promoter sequence of CRK10 in vitro. This Oryza sativa subsp. japonica (Rice) protein is Transcription factor TGA2.1.